A 1132-amino-acid polypeptide reads, in one-letter code: Myosin-binding protein C, fast-type (1132 aa).

The tract at residues 1-59 is disordered; that stretch reads MPEPSKAAPKKEAKKKEEKKEEKKEAPPPQEHKDEAPDDVHPPETPDPEGLFLSKPQNV. The span at 9–44 shows a compositional bias: basic and acidic residues; that stretch reads PKKEAKKKEEKKEEKKEAPPPQEHKDEAPDDVHPPE. Ig-like C2-type domains follow at residues 48–149, 249–338, 339–429, 430–530, and 531–630; these read PEGL…SIDV, SEAF…VKEP, PVTV…VEEK, QLEV…KQEP, and PKIH…VVDV. Fibronectin type-III domains are found at residues 633-729 and 731-826; these read PPQS…IAPT and EPTH…IREI. In terms of domain architecture, Ig-like C2-type 6 spans 830 to 923; the sequence is PKIRLPRHLR…ATLRLRVVER (94 aa). A Fibronectin type-III 3 domain is found at 926–1022; it reads PPQAVRVMEV…HNTARIAKEG (97 aa). The region spanning 1039-1132 is the Ig-like C2-type 7 domain; sequence PQFLTPLVDR…ECRLDVRVPQ (94 aa).

It belongs to the immunoglobulin superfamily. MyBP family.

Thick filament-associated protein located in the crossbridge region of vertebrate striated muscle a bands. In vitro it binds MHC, F-actin and native thin filaments, and modifies the activity of actin-activated myosin ATPase. It may modulate muscle contraction or may play a more structural role. This Gallus gallus (Chicken) protein is Myosin-binding protein C, fast-type (MYBPC2).